A 549-amino-acid chain; its full sequence is Glucose-6-phosphate isomerase (549 aa).

Glu-353 acts as the Proton donor in catalysis. Catalysis depends on residues His-384 and Lys-512.

It belongs to the GPI family.

The protein resides in the cytoplasm. The catalysed reaction is alpha-D-glucose 6-phosphate = beta-D-fructose 6-phosphate. The protein operates within carbohydrate biosynthesis; gluconeogenesis. It participates in carbohydrate degradation; glycolysis; D-glyceraldehyde 3-phosphate and glycerone phosphate from D-glucose: step 2/4. Its function is as follows. Catalyzes the reversible isomerization of glucose-6-phosphate to fructose-6-phosphate. This is Glucose-6-phosphate isomerase from Alteromonas mediterranea (strain DSM 17117 / CIP 110805 / LMG 28347 / Deep ecotype).